We begin with the raw amino-acid sequence, 397 residues long: Exodeoxyribonuclease 7 large subunit (397 aa).

It belongs to the XseA family. In terms of assembly, heterooligomer composed of large and small subunits.

The protein resides in the cytoplasm. The catalysed reaction is Exonucleolytic cleavage in either 5'- to 3'- or 3'- to 5'-direction to yield nucleoside 5'-phosphates.. Functionally, bidirectionally degrades single-stranded DNA into large acid-insoluble oligonucleotides, which are then degraded further into small acid-soluble oligonucleotides. This Anaplasma marginale (strain St. Maries) protein is Exodeoxyribonuclease 7 large subunit.